Reading from the N-terminus, the 397-residue chain is G2/mitotic-specific cyclin-B2 (397 aa).

Disordered stretches follow at residues 1-20 and 64-97; these read MALLRRPTVSSDLKNIDTGV and KVTHVNKQPKPTASVKPVQMETLAPKDPPAPEDV. Residue Thr8 is modified to Phosphothreonine. The residue at position 11 (Ser11) is a Phosphoserine. Positions 64-74 are enriched in polar residues; that stretch reads KVTHVNKQPKP. Phosphoserine occurs at positions 77, 98, and 391.

It belongs to the cyclin family. Cyclin AB subfamily. Interacts with the CDK1 protein kinase to form a serine/threonine kinase holoenzyme complex also known as maturation promoting factor (MPF). The cyclin subunit imparts substrate specificity to the complex.

Functionally, essential for the control of the cell cycle at the G2/M (mitosis) transition. The polypeptide is G2/mitotic-specific cyclin-B2 (CCNB2) (Mesocricetus auratus (Golden hamster)).